The primary structure comprises 582 residues: MGKKSRVKTQKSGSGAAAAVSPKEMLNLISELLQKCSNPNSTPGREWEEYVQIRGLVEKIRKKQRGLSVVFDGKREDYFPELMEWCKENGASTDGFELVEFPEEGFGLKATREIKAEELFLWVPRKLLMTVESAKGSVLGPLYSQDRILQAMGNITLAFHLLCERADPNSFWLPYIKTLPNEYDTPLYFNEDEVQYLQSTQAILDVFSQYKNTARQYAYFYKVIQTHPNANKLPLKDSFTFDDYRWAVSSVMTRQNQIPTEDGSRVTLALIPLWDMCNHTNGLITTGYNLEDDRCECVALQDFKSGEQIYIFYGTRSNAEFVIHNGFFFENNLHDRVKIKLGVSKSDRLYAMKAEVLARAGIPTSSVFALHVTEPPISAQLLAFLRVFCMNEDELKGHLIGDHAIDKIFTLGNSEFPVSWENEIKLWTFLEARASLLLKTYKTTVEDDNKVLEQPDMTFHSAMAIKLRRVEKEILEKALKSASDNRKLYSKNSEEGTPLPKYEASNIAFVENSVADSKLPVVLKSLDDEEVKLQEAITISEITENGFLNDKDLLPNGTKSENDSFLAEDNQQETGNAKDFCS.

Residues Arg75, 104 to 106 (EGF), Arg254, 275 to 279 (DMCNH), and 325 to 327 (NGF) contribute to the S-adenosyl-L-methionine site. Residues 94 to 314 (DGFELVEFPE…SGEQIYIFYG (221 aa)) form the SET domain. Residues 550–582 (DKDLLPNGTKSENDSFLAEDNQQETGNAKDFCS) form a disordered region.

The protein belongs to the class V-like SAM-binding methyltransferase superfamily. SETD3 actin-histidine methyltransferase family.

Its subcellular location is the cytoplasm. The enzyme catalyses L-histidyl-[protein] + S-adenosyl-L-methionine = N(tele)-methyl-L-histidyl-[protein] + S-adenosyl-L-homocysteine + H(+). Functionally, protein-histidine N-methyltransferase that specifically mediates 3-methylhistidine (tele-methylhistidine) methylation of actin at 'His-73'. Does not have protein-lysine N-methyltransferase activity and probably only catalyzes histidine methylation of actin. The sequence is that of Actin-histidine N-methyltransferase from Xenopus tropicalis (Western clawed frog).